Reading from the N-terminus, the 55-residue chain is Rubredoxin-2 (55 aa).

Residues 1–54 enclose the Rubredoxin-like domain; sequence MRKWQCVVCGFIYDEALGLPEEGIPAGTRWEDIPADWVCPDCGVGKIDFEMIEI. The Fe cation site is built by Cys-6, Cys-9, Cys-39, and Cys-42.

It belongs to the rubredoxin family. Fe(3+) serves as cofactor.

The protein localises to the cytoplasm. Its pathway is hydrocarbon metabolism; alkane degradation. Involved in the hydrocarbon hydroxylating system, which transfers electrons from NADH to rubredoxin reductase and then through rubredoxin to alkane 1 monooxygenase. This is Rubredoxin-2 (rubA2) from Pseudomonas aeruginosa (strain ATCC 15692 / DSM 22644 / CIP 104116 / JCM 14847 / LMG 12228 / 1C / PRS 101 / PAO1).